The primary structure comprises 89 residues: DNA-directed RNA polymerase subunit omega (89 aa).

It belongs to the RNA polymerase subunit omega family. In terms of assembly, the RNAP catalytic core consists of 2 alpha, 1 beta, 1 beta' and 1 omega subunit. When a sigma factor is associated with the core the holoenzyme is formed, which can initiate transcription.

It catalyses the reaction RNA(n) + a ribonucleoside 5'-triphosphate = RNA(n+1) + diphosphate. In terms of biological role, promotes RNA polymerase assembly. Latches the N- and C-terminal regions of the beta' subunit thereby facilitating its interaction with the beta and alpha subunits. In Idiomarina loihiensis (strain ATCC BAA-735 / DSM 15497 / L2-TR), this protein is DNA-directed RNA polymerase subunit omega.